We begin with the raw amino-acid sequence, 205 residues long: Large ribosomal subunit protein bL21m (205 aa).

The transit peptide at 1–39 (MAASSLTVTLGRLASACSHSILRPSGPGAASLWSASRRF) directs the protein to the mitochondrion.

It belongs to the bacterial ribosomal protein bL21 family. Component of the mitochondrial large ribosomal subunit (mt-LSU). Mature mammalian 55S mitochondrial ribosomes consist of a small (28S) and a large (39S) subunit. The 28S small subunit contains a 12S ribosomal RNA (12S mt-rRNA) and 30 different proteins. The 39S large subunit contains a 16S rRNA (16S mt-rRNA), a copy of mitochondrial valine transfer RNA (mt-tRNA(Val)), which plays an integral structural role, and 52 different proteins.

Its subcellular location is the mitochondrion. This Homo sapiens (Human) protein is Large ribosomal subunit protein bL21m (MRPL21).